Reading from the N-terminus, the 600-residue chain is Proline--tRNA ligase (600 aa).

This sequence belongs to the class-II aminoacyl-tRNA synthetase family. ProS type 1 subfamily. In terms of assembly, homodimer.

Its subcellular location is the cytoplasm. It catalyses the reaction tRNA(Pro) + L-proline + ATP = L-prolyl-tRNA(Pro) + AMP + diphosphate. In terms of biological role, catalyzes the attachment of proline to tRNA(Pro) in a two-step reaction: proline is first activated by ATP to form Pro-AMP and then transferred to the acceptor end of tRNA(Pro). As ProRS can inadvertently accommodate and process non-cognate amino acids such as alanine and cysteine, to avoid such errors it has two additional distinct editing activities against alanine. One activity is designated as 'pretransfer' editing and involves the tRNA(Pro)-independent hydrolysis of activated Ala-AMP. The other activity is designated 'posttransfer' editing and involves deacylation of mischarged Ala-tRNA(Pro). The misacylated Cys-tRNA(Pro) is not edited by ProRS. The protein is Proline--tRNA ligase of Prochlorococcus marinus (strain MIT 9515).